A 406-amino-acid polypeptide reads, in one-letter code: DNA primase DnaG (406 aa).

Positions 169–247 constitute a Toprim domain; that stretch reads PNLIIVEGRA…KIDFVARAPI (79 aa). E175, D220, and D222 together coordinate Mg(2+).

This sequence belongs to the archaeal DnaG primase family. In terms of assembly, forms a ternary complex with MCM helicase and DNA. Component of the archaeal exosome complex. Interacts with Csl4 but not with Rrp4. Mg(2+) serves as cofactor.

It carries out the reaction ssDNA + n NTP = ssDNA/pppN(pN)n-1 hybrid + (n-1) diphosphate.. Functionally, RNA polymerase that catalyzes the synthesis of short RNA molecules used as primers for DNA polymerase during DNA replication. Can use NTPs but not dNTPs. Binds DNA. Also part of the exosome, which is a complex involved in RNA degradation. Acts as a poly(A)-binding protein that enhances the interaction between heteromeric, adenine-rich transcripts and the exosome. This is DNA primase DnaG from Saccharolobus solfataricus (strain ATCC 35092 / DSM 1617 / JCM 11322 / P2) (Sulfolobus solfataricus).